We begin with the raw amino-acid sequence, 428 residues long: Immunoglobulin superfamily member 11 (428 aa).

An N-terminal signal peptide occupies residues 1–22; that stretch reads MTRRRSALASWLLLSLLGVAAS. The Ig-like V-type domain occupies 23 to 136; sequence LEVSESPGSV…DRGGRNIGVT (114 aa). Residues 23 to 239 are Extracellular-facing; it reads LEVSESPGSV…LQVISPQPRS (217 aa). Intrachain disulfides connect cysteine 44–cysteine 120 and cysteine 165–cysteine 215. A glycan (N-linked (GlcNAc...) asparagine) is linked at asparagine 102. The 91-residue stretch at 144-234 folds into the Ig-like C2-type domain; the sequence is PSAPNCQIQG…TCLLDLQVIS (91 aa). A helical transmembrane segment spans residues 240–260; that stretch reads VGVIAGAVGTGAVLIVICLAL. Residues 261–428 are Cytoplasmic-facing; the sequence is TSGAFFYWRS…PAQSRAGSLV (168 aa). An Omega-N-methylarginine modification is found at arginine 375.

Post-translationally, N-glycosylated.

It is found in the cell membrane. Functions as a cell adhesion molecule through homophilic interaction. Stimulates cell growth. The chain is Immunoglobulin superfamily member 11 (Igsf11) from Rattus norvegicus (Rat).